The following is a 349-amino-acid chain: MDLIAEPNLKELINSTTHKWIFVGGKGGVGKTTSSCSISIQMALAQPKKQFLLISTDPAHNLSDAFGEKFGKDARKVTGMDNLSCMEIDPSAALKDMNDMSVAQNDKNDGFSDLLQGGGLAELTGSIPGIDEALSFMEVMKHIKRQEEGEGEKYDTVIFDTAPTGHTLRFLQLPQTLSQLLQKFGEIAGRFGPMLNSLTGGGQNMDIMGKVDELKANVEKIREQFTNPDMTTFVCVCISEFLSLYETERLIQELMSYEMDVNSIIVNQLLFADDDAEHNCRRCQARWNMQKKYLDQIGELYDDFHVVKMPLCAGEIRGLNNLKKFSQFLNKEYDPVADNKIIYELEEQK.

26–33 (KGGVGKTT) contributes to the ATP binding site. D57 is a catalytic residue. Residues E240 and N267 each contribute to the ATP site. Residues C280 and C283 each contribute to the Zn(2+) site.

Belongs to the arsA ATPase family. In terms of assembly, homodimer. Component of the Golgi to ER traffic (GET) complex, which is composed of GET1, GET2 and GET3. Within the complex, GET1 and GET2 form a heterotetramer which is stabilized by phosphatidylinositol binding and which binds to the GET3 homodimer. Interacts with the chloride channel protein GEF1.

It is found in the cytoplasm. It localises to the endoplasmic reticulum. Its subcellular location is the golgi apparatus. ATPase required for the post-translational delivery of tail-anchored (TA) proteins to the endoplasmic reticulum. Recognizes and selectively binds the transmembrane domain of TA proteins in the cytosol. This complex then targets to the endoplasmic reticulum by membrane-bound receptors GET1 and GET2, where the tail-anchored protein is released for insertion. This process is regulated by ATP binding and hydrolysis. ATP binding drives the homodimer towards the closed dimer state, facilitating recognition of newly synthesized TA membrane proteins. ATP hydrolysis is required for insertion. Subsequently, the homodimer reverts towards the open dimer state, lowering its affinity for the GET1-GET2 receptor, and returning it to the cytosol to initiate a new round of targeting. Cooperates with the HDEL receptor ERD2 to mediate the ATP-dependent retrieval of resident ER proteins that contain a C-terminal H-D-E-L retention signal from the Golgi to the ER. Involved in low-level resistance to the oxyanions arsenite and arsenate, and in heat tolerance. The polypeptide is ATPase GET3 (Lachancea thermotolerans (strain ATCC 56472 / CBS 6340 / NRRL Y-8284) (Yeast)).